Consider the following 225-residue polypeptide: Cytidylate kinase (225 aa).

Residue 12-20 participates in ATP binding; it reads GPSGAGKGT.

The protein belongs to the cytidylate kinase family. Type 1 subfamily.

It localises to the cytoplasm. It catalyses the reaction CMP + ATP = CDP + ADP. The catalysed reaction is dCMP + ATP = dCDP + ADP. The protein is Cytidylate kinase of Pectobacterium atrosepticum (strain SCRI 1043 / ATCC BAA-672) (Erwinia carotovora subsp. atroseptica).